The chain runs to 241 residues: 2-heptyl-1-hydroxyquinolin-4(1H)-one methyltransferase (241 aa).

This sequence belongs to the methyltransferase superfamily. As to quaternary structure, monomer.

It is found in the cytoplasm. The catalysed reaction is 2-heptyl-1-hydroxy-4(1H)-quinolinone + S-adenosyl-L-methionine = 2-heptyl-1-methoxy-4(1H)-quinolinone + S-adenosyl-L-homocysteine + H(+). Involved in cellular response to chemical stress and may contribute to resistance toward antimicrobial natural compounds as well as drugs. Catalyzes the methylation and detoxification of the P.aeruginosa toxin 2-heptyl-1-hydroxy-4(1H)-quinolinone (HQNO) to 2-heptyl-1-methoxy-4(1H)-quinolinone (HMOQ). The polypeptide is 2-heptyl-1-hydroxyquinolin-4(1H)-one methyltransferase (Mycobacterium bovis (strain BCG / Pasteur 1173P2)).